The following is a 67-amino-acid chain: MGEISITKLLVVAALVVLLFGTKKLRTLGGDLGAAIKGFKKAMNDDDAAAKKSAEDTVPAEKLSHKE.

Residues 4 to 21 (ISITKLLVVAALVVLLFG) traverse the membrane as a helical segment.

This sequence belongs to the TatA/E family. TatE subfamily.

The protein localises to the cell inner membrane. Its function is as follows. Part of the twin-arginine translocation (Tat) system that transports large folded proteins containing a characteristic twin-arginine motif in their signal peptide across membranes. TatE shares overlapping functions with TatA. The polypeptide is Probable Sec-independent protein translocase protein TatE (Enterobacter cloacae subsp. cloacae (strain ATCC 13047 / DSM 30054 / NBRC 13535 / NCTC 10005 / WDCM 00083 / NCDC 279-56)).